The sequence spans 181 residues: Malignant T-cell-amplified sequence 1 (181 aa).

Threonine 81 carries the phosphothreonine; by MAPK1 and MAPK3 modification. The PUA domain occupies leucine 92–asparagine 171. Phosphoserine; by CDK1 is present on serine 118.

It belongs to the MCTS1 family. In terms of assembly, interacts (via PUA domain) with DENR; the complex regulates translation reinitiation. In terms of processing, phosphorylation is critical for stabilization and promotion of cell proliferation. As to expression, ubiquitous. Over-expressed in T-cell lymphoid cell lines and in non-Hodgkin lymphoma cell lines as well as in a subset of primary large B-cell lymphomas.

The protein localises to the cytoplasm. In terms of biological role, translation regulator forming a complex with DENR to promote translation reinitiation. Translation reinitiation is the process where the small ribosomal subunit remains attached to the mRNA following termination of translation of a regulatory upstream ORF (uORF), and resume scanning on the same mRNA molecule to initiate translation of a downstream ORF, usually the main ORF (mORF). The MCTS1/DENR complex is pivotal to two linked mechanisms essential for translation reinitiation. Firstly, the dissociation of deacylated tRNAs from post-termination 40S ribosomal complexes during ribosome recycling. Secondly, the recruitment in an EIF2-independent manner of aminoacylated initiator tRNA to P site of 40S ribosomes for a new round of translation. This regulatory mechanism governs the translation of more than 150 genes which translation reinitiation is MCTS1/DENR complex-dependent. Consequently, modulates various unrelated biological processes including cell cycle regulation and DNA damage signaling and repair. Notably, it positively regulates interferon gamma immunity to mycobacteria by enhancing the translation of JAK2. This chain is Malignant T-cell-amplified sequence 1 (MCTS1), found in Homo sapiens (Human).